We begin with the raw amino-acid sequence, 450 residues long: Tubulin alpha-6 chain (450 aa).

Positions 11, 71, 144, 145, 179, 206, and 228 each coordinate GTP. Glu-71 lines the Mg(2+) pocket. Glu-254 is a catalytic residue. The residue at position 349 (Thr-349) is a Phosphothreonine. The segment at 430 to 450 is disordered; that stretch reads KDYEEVGAEGGDDEDDEGEEY. The segment covering 431–450 has biased composition (acidic residues); the sequence is DYEEVGAEGGDDEDDEGEEY.

It belongs to the tubulin family. As to quaternary structure, dimer of alpha and beta chains. A typical microtubule is a hollow water-filled tube with an outer diameter of 25 nm and an inner diameter of 15 nM. Alpha-beta heterodimers associate head-to-tail to form protofilaments running lengthwise along the microtubule wall with the beta-tubulin subunit facing the microtubule plus end conferring a structural polarity. Microtubules usually have 13 protofilaments but different protofilament numbers can be found in some organisms and specialized cells. Interacts with TFCB. It depends on Mg(2+) as a cofactor. In terms of processing, undergoes a tyrosination/detyrosination cycle, the cyclic removal and re-addition of a C-terminal tyrosine residue by the enzymes tubulin tyrosine carboxypeptidase (TTCP) and tubulin tyrosine ligase (TTL), respectively. Post-translationally, acetylation of alpha chains at Lys-40 stabilizes microtubules and affects affinity and processivity of microtubule motors. This modification has a role in multiple cellular functions, ranging from cell motility, cell cycle progression or cell differentiation to intracellular trafficking and signaling.

The protein localises to the cytoplasm. The protein resides in the cytoskeleton. The enzyme catalyses GTP + H2O = GDP + phosphate + H(+). Tubulin is the major constituent of microtubules, a cylinder consisting of laterally associated linear protofilaments composed of alpha- and beta-tubulin heterodimers. Microtubules grow by the addition of GTP-tubulin dimers to the microtubule end, where a stabilizing cap forms. Below the cap, tubulin dimers are in GDP-bound state, owing to GTPase activity of alpha-tubulin. This Arabidopsis thaliana (Mouse-ear cress) protein is Tubulin alpha-6 chain (TUBA6).